Consider the following 355-residue polypeptide: Galectin-9 (355 aa).

Galectin domains follow at residues 17–148 (FTGM…ISFQ) and 227–355 (FFTS…HVQT). Residues asparagine 48, histidine 61, arginine 65, asparagine 75, 82-88 (WGTEERK), histidine 267, arginine 271, threonine 281, and 287-293 (WGSEERS) each bind a beta-D-galactoside.

Its subcellular location is the cytoplasm. The protein resides in the nucleus. It is found in the secreted. Its function is as follows. Binds galactosides. Has high affinity for the Forssman pentasaccharide. Ligand for HAVCR2/TIM3. Binding to HAVCR2 induces T-helper type 1 lymphocyte (Th1) death. Also stimulates bactericidal activity in infected macrophages by causing macrophage activation and IL1B secretion which restricts intracellular bacterial growth. Ligand for P4HB; the interaction retains P4HB at the cell surface of Th2 T helper cells, increasing disulfide reductase activity at the plasma membrane, altering the plasma membrane redox state and enhancing cell migration. Ligand for CD44; the interaction enhances binding of SMAD3 to the FOXP3 promoter, leading to up-regulation of FOXP3 expression and increased induced regulatory T (iTreg) cell stability and suppressive function. Promotes ability of mesenchymal stromal cells to suppress T-cell proliferation. Expands regulatory T-cells and induces cytotoxic T-cell apoptosis following virus infection. Activates ERK1/2 phosphorylation inducing cytokine (IL-6, IL-8, IL-12) and chemokine (CCL2) production in mast and dendritic cells. Inhibits degranulation and induces apoptosis of mast cells. Induces maturation and migration of dendritic cells. Inhibits natural killer (NK) cell function. Can transform NK cell phenotype from peripheral to decidual during pregnancy. Astrocyte derived galectin-9 enhances microglial TNF production. May play a role in thymocyte-epithelial interactions relevant to the biology of the thymus. May provide the molecular basis for urate flux across cell membranes, allowing urate that is formed during purine metabolism to efflux from cells and serving as an electrogenic transporter that plays an important role in renal and gastrointestinal urate excretion. Highly selective to the anion urate. The chain is Galectin-9 (LGALS9) from Bos taurus (Bovine).